The sequence spans 801 residues: Protein SDA1 homolog (801 aa).

4 disordered regions span residues 1–40, 495–517, 536–647, and 739–801; these read MGKVSKSPGKGEKRIGKVGKKNGKSNAPTEGSNSGKASRF, RKDRGKPQEKDDEDEEYNGFARP, GEQG…SKNS, and DYKF…RKPQ. Over residues 24 to 40 the composition is skewed to polar residues; that stretch reads KSNAPTEGSNSGKASRF. 2 stretches are compositionally biased toward acidic residues: residues 544–568 and 583–633; these read DGTDSELDVSDVDTDDVDTDDDADE and NDAE…EASE. 2 stretches are compositionally biased toward basic residues: residues 770–779 and 787–801; these read NKIRGRNRQR and SLRHYLMRQSGRKPQ.

It belongs to the SDA1 family.

It localises to the nucleus. Functionally, required for 60S pre-ribosomal subunits export to the cytoplasm. Required for normal somatic gonad development and for regulation of germline development and proliferation. The sequence is that of Protein SDA1 homolog (pro-3) from Caenorhabditis elegans.